Consider the following 438-residue polypeptide: MTVNPTHTALWPAPHASGAVDATVHVPGSKSVTNRALVLAALASEPGWLRRPLRSRDTLLMAEALRTLGVEIEEGVGPEGTGEFWRVIPAGLRGPATVDVGNAGTVMRFLPPVATLADGAVRFDGDPRSYERPLHGVIDALRVLGARIDDDGRGALPLTVHGGGALEGGPVEIDASSSSQFVSALLLSGPRFNQGVEVRHTGSALPSMPHIRMTVDMLRAVGAQVDTPESGGEPNVWRVTPGALLGRDLTVEPDLSNAQPFLAAALVTGGKVVIPDWPSRTTQPGDRLREIFTDMGGSCELTDFGLVFTGSGAIHGIDVDLSEVGELTPGIAAVAALADSPSTLRGVAHLRLHETDRLAALTKEINELGGDVTETADGLHIRPRRLHGGVFHTYDDHRMATAGAVLGLAVEGVQIENVATTAKTLPDFPDLWTGMLGA.

3-phosphoshikimate-binding residues include lysine 30, serine 31, and arginine 35. Lysine 30 provides a ligand contact to phosphoenolpyruvate. Positions 104 and 132 each coordinate phosphoenolpyruvate. The 3-phosphoshikimate site is built by serine 178, serine 179, glutamine 180, serine 207, glutamate 326, and histidine 353. Residue glutamine 180 participates in phosphoenolpyruvate binding. Residue glutamate 326 is the Proton acceptor of the active site. Phosphoenolpyruvate contacts are provided by arginine 357, arginine 398, and lysine 423.

The protein belongs to the EPSP synthase family. In terms of assembly, monomer.

Its subcellular location is the cytoplasm. The enzyme catalyses 3-phosphoshikimate + phosphoenolpyruvate = 5-O-(1-carboxyvinyl)-3-phosphoshikimate + phosphate. The protein operates within metabolic intermediate biosynthesis; chorismate biosynthesis; chorismate from D-erythrose 4-phosphate and phosphoenolpyruvate: step 6/7. Its function is as follows. Catalyzes the transfer of the enolpyruvyl moiety of phosphoenolpyruvate (PEP) to the 5-hydroxyl of shikimate-3-phosphate (S3P) to produce enolpyruvyl shikimate-3-phosphate and inorganic phosphate. The chain is 3-phosphoshikimate 1-carboxyvinyltransferase 1 from Streptomyces coelicolor (strain ATCC BAA-471 / A3(2) / M145).